The sequence spans 325 residues: 5-dehydro-2-deoxygluconokinase (325 aa).

It belongs to the carbohydrate kinase PfkB family.

It carries out the reaction 5-dehydro-2-deoxy-D-gluconate + ATP = 6-phospho-5-dehydro-2-deoxy-D-gluconate + ADP + H(+). It functions in the pathway polyol metabolism; myo-inositol degradation into acetyl-CoA; acetyl-CoA from myo-inositol: step 5/7. Catalyzes the phosphorylation of 5-dehydro-2-deoxy-D-gluconate (2-deoxy-5-keto-D-gluconate or DKG) to 6-phospho-5-dehydro-2-deoxy-D-gluconate (DKGP). In Bacillus subtilis (strain 168), this protein is 5-dehydro-2-deoxygluconokinase (iolC).